A 65-amino-acid polypeptide reads, in one-letter code: Toxin KTx8 (65 aa).

Positions 1 to 25 are cleaved as a signal peptide; sequence MNKVCFVVVLVLFVALAAYVSPIEG. 3 cysteine pairs are disulfide-bonded: Cys31/Cys53, Cys38/Cys61, and Cys42/Cys63.

It belongs to the short scorpion toxin superfamily. Potassium channel inhibitor family. Alpha-KTx 11 subfamily. In terms of tissue distribution, expressed by the venom gland.

The protein resides in the secreted. This recombinant toxin inhibits the mammalian voltage-gated potassium channels Kv1.3/KCNA3 in vitro with an IC(50) of 26.40 nM. This Lychas mucronatus (Chinese swimming scorpion) protein is Toxin KTx8.